A 443-amino-acid polypeptide reads, in one-letter code: Thymidine phosphorylase (443 aa).

Belongs to the thymidine/pyrimidine-nucleoside phosphorylase family. Homodimer.

The catalysed reaction is thymidine + phosphate = 2-deoxy-alpha-D-ribose 1-phosphate + thymine. It functions in the pathway pyrimidine metabolism; dTMP biosynthesis via salvage pathway; dTMP from thymine: step 1/2. Its function is as follows. The enzymes which catalyze the reversible phosphorolysis of pyrimidine nucleosides are involved in the degradation of these compounds and in their utilization as carbon and energy sources, or in the rescue of pyrimidine bases for nucleotide synthesis. This is Thymidine phosphorylase from Aeromonas hydrophila subsp. hydrophila (strain ATCC 7966 / DSM 30187 / BCRC 13018 / CCUG 14551 / JCM 1027 / KCTC 2358 / NCIMB 9240 / NCTC 8049).